The following is a 690-amino-acid chain: Elongation factor G (690 aa).

The 275-residue stretch at 8 to 282 folds into the tr-type G domain; that stretch reads KMTRNIGIMA…AVIDYLPSPL (275 aa). Residues 17–24, 81–85, and 135–138 contribute to the GTP site; these read AHIDAGKT, DTPGH, and NKMD.

It belongs to the TRAFAC class translation factor GTPase superfamily. Classic translation factor GTPase family. EF-G/EF-2 subfamily.

Its subcellular location is the cytoplasm. Its function is as follows. Catalyzes the GTP-dependent ribosomal translocation step during translation elongation. During this step, the ribosome changes from the pre-translocational (PRE) to the post-translocational (POST) state as the newly formed A-site-bound peptidyl-tRNA and P-site-bound deacylated tRNA move to the P and E sites, respectively. Catalyzes the coordinated movement of the two tRNA molecules, the mRNA and conformational changes in the ribosome. This chain is Elongation factor G, found in Acholeplasma laidlawii (strain PG-8A).